Here is a 190-residue protein sequence, read N- to C-terminus: 6,7-dimethyl-8-ribityllumazine synthase (190 aa).

5-amino-6-(D-ribitylamino)uracil contacts are provided by residues F23, 61–63 (SFE), and 85–87 (AVI). 90–91 (QT) contributes to the (2S)-2-hydroxy-3-oxobutyl phosphate binding site. Catalysis depends on H93, which acts as the Proton donor. F118 serves as a coordination point for 5-amino-6-(D-ribitylamino)uracil. Residue R132 coordinates (2S)-2-hydroxy-3-oxobutyl phosphate.

It belongs to the DMRL synthase family.

The catalysed reaction is (2S)-2-hydroxy-3-oxobutyl phosphate + 5-amino-6-(D-ribitylamino)uracil = 6,7-dimethyl-8-(1-D-ribityl)lumazine + phosphate + 2 H2O + H(+). Its pathway is cofactor biosynthesis; riboflavin biosynthesis; riboflavin from 2-hydroxy-3-oxobutyl phosphate and 5-amino-6-(D-ribitylamino)uracil: step 1/2. Catalyzes the formation of 6,7-dimethyl-8-ribityllumazine by condensation of 5-amino-6-(D-ribitylamino)uracil with 3,4-dihydroxy-2-butanone 4-phosphate. This is the penultimate step in the biosynthesis of riboflavin. The protein is 6,7-dimethyl-8-ribityllumazine synthase of Trichormus variabilis (strain ATCC 29413 / PCC 7937) (Anabaena variabilis).